We begin with the raw amino-acid sequence, 141 residues long: Nucleoside diphosphate kinase (141 aa).

Residues K11, F59, R87, T93, R104, and N114 each contribute to the ATP site. H117 acts as the Pros-phosphohistidine intermediate in catalysis.

It belongs to the NDK family. As to quaternary structure, homotetramer. The cofactor is Mg(2+).

It is found in the cytoplasm. The enzyme catalyses a 2'-deoxyribonucleoside 5'-diphosphate + ATP = a 2'-deoxyribonucleoside 5'-triphosphate + ADP. The catalysed reaction is a ribonucleoside 5'-diphosphate + ATP = a ribonucleoside 5'-triphosphate + ADP. Its function is as follows. Major role in the synthesis of nucleoside triphosphates other than ATP. The ATP gamma phosphate is transferred to the NDP beta phosphate via a ping-pong mechanism, using a phosphorylated active-site intermediate. The sequence is that of Nucleoside diphosphate kinase from Legionella pneumophila (strain Paris).